We begin with the raw amino-acid sequence, 216 residues long: Ribosomal RNA small subunit methyltransferase G (216 aa).

The S-adenosyl-L-methionine site is built by glycine 75, leucine 80, and arginine 141.

It belongs to the methyltransferase superfamily. RNA methyltransferase RsmG family.

The protein localises to the cytoplasm. The enzyme catalyses guanosine(527) in 16S rRNA + S-adenosyl-L-methionine = N(7)-methylguanosine(527) in 16S rRNA + S-adenosyl-L-homocysteine. In terms of biological role, specifically methylates the N7 position of guanine in position 527 of 16S rRNA. The chain is Ribosomal RNA small subunit methyltransferase G from Nitrosospira multiformis (strain ATCC 25196 / NCIMB 11849 / C 71).